Consider the following 195-residue polypeptide: Transcription factor LBX2 (195 aa).

2 disordered regions span residues 1 to 89 (MNSV…KSRT) and 164 to 195 (PALP…QVDD). A DNA-binding region (homeobox) is located at residues 84–143 (RRKSRTAFTAQQVLELERRFVFQKYLAPSERDGLAARLGLANAQVVTWFQNRRAKLKRDV). Positions 186–195 (LSDEEIQVDD) are enriched in acidic residues.

As to expression, expressed in the developing urogenital system, eye and brain.

Its subcellular location is the nucleus. In terms of biological role, transcription factor. The chain is Transcription factor LBX2 (Lbx2) from Mus musculus (Mouse).